The sequence spans 155 residues: Small ribosomal subunit protein uS10m (155 aa).

The protein belongs to the universal ribosomal protein uS10 family. Component of the mitochondrial ribosome small subunit (28S) which comprises a 12S rRNA and about 30 distinct proteins.

Its subcellular location is the mitochondrion. The protein is Small ribosomal subunit protein uS10m (Mrps10) of Rattus norvegicus (Rat).